The following is a 268-amino-acid chain: Hydroxyethylthiazole kinase (268 aa).

Met44 contacts substrate. ATP-binding residues include Arg119 and Ser165. Residue Gly192 coordinates substrate.

The protein belongs to the Thz kinase family. Requires Mg(2+) as cofactor.

The enzyme catalyses 5-(2-hydroxyethyl)-4-methylthiazole + ATP = 4-methyl-5-(2-phosphooxyethyl)-thiazole + ADP + H(+). Its pathway is cofactor biosynthesis; thiamine diphosphate biosynthesis; 4-methyl-5-(2-phosphoethyl)-thiazole from 5-(2-hydroxyethyl)-4-methylthiazole: step 1/1. Functionally, catalyzes the phosphorylation of the hydroxyl group of 4-methyl-5-beta-hydroxyethylthiazole (THZ). In Corynebacterium glutamicum (strain R), this protein is Hydroxyethylthiazole kinase.